Reading from the N-terminus, the 319-residue chain is Cytochrome f (319 aa).

A signal peptide spans 1–34 (MQNRNTYEWTKKMTRLISVLVMIHIITRTSISNA). Tyr35, Cys55, Cys58, and His59 together coordinate heme. Residues 285-305 (VKGLLLFLASVILAQIFLVLK) form a helical membrane-spanning segment.

The protein belongs to the cytochrome f family. In terms of assembly, the 4 large subunits of the cytochrome b6-f complex are cytochrome b6, subunit IV (17 kDa polypeptide, petD), cytochrome f and the Rieske protein, while the 4 small subunits are PetG, PetL, PetM and PetN. The complex functions as a dimer. It depends on heme as a cofactor.

Its subcellular location is the plastid. It localises to the chloroplast thylakoid membrane. Component of the cytochrome b6-f complex, which mediates electron transfer between photosystem II (PSII) and photosystem I (PSI), cyclic electron flow around PSI, and state transitions. This is Cytochrome f from Pinus koraiensis (Korean pine).